A 212-amino-acid polypeptide reads, in one-letter code: Probable GTP-binding protein EngB (212 aa).

The EngB-type G domain maps to 25–199 (FGYEVAFAGR…WAKLDEWMEY (175 aa)). Residues 33–40 (GRSNAGKS), 60–64 (GRTQL), 78–81 (DLPG), 145–148 (TKSD), and 178–180 (FSS) each bind GTP. Serine 40 and threonine 62 together coordinate Mg(2+).

The protein belongs to the TRAFAC class TrmE-Era-EngA-EngB-Septin-like GTPase superfamily. EngB GTPase family. Mg(2+) serves as cofactor.

In terms of biological role, necessary for normal cell division and for the maintenance of normal septation. The protein is Probable GTP-binding protein EngB of Hydrogenovibrio crunogenus (strain DSM 25203 / XCL-2) (Thiomicrospira crunogena).